We begin with the raw amino-acid sequence, 262 residues long: Small ribosomal subunit protein eS4 (262 aa).

One can recognise an S4 RNA-binding domain in the interval 42 to 105 (LPLIIMLRNR…GEFFRLLYDV (64 aa)).

The protein belongs to the eukaryotic ribosomal protein eS4 family.

This is Small ribosomal subunit protein eS4 (RpS4) from Ixodes scapularis (Black-legged tick).